Consider the following 164-residue polypeptide: Phosphopantetheine adenylyltransferase (164 aa).

A substrate-binding site is contributed by serine 9. ATP is bound by residues 9-10 (SF) and histidine 17. 3 residues coordinate substrate: lysine 41, leucine 73, and lysine 87. Residues 88-90 (GLR), glutamate 98, and 123-129 (YSYISSS) contribute to the ATP site.

It belongs to the bacterial CoaD family. In terms of assembly, homohexamer. Mg(2+) is required as a cofactor.

Its subcellular location is the cytoplasm. The catalysed reaction is (R)-4'-phosphopantetheine + ATP + H(+) = 3'-dephospho-CoA + diphosphate. It functions in the pathway cofactor biosynthesis; coenzyme A biosynthesis; CoA from (R)-pantothenate: step 4/5. Its function is as follows. Reversibly transfers an adenylyl group from ATP to 4'-phosphopantetheine, yielding dephospho-CoA (dPCoA) and pyrophosphate. The protein is Phosphopantetheine adenylyltransferase of Clostridium perfringens (strain ATCC 13124 / DSM 756 / JCM 1290 / NCIMB 6125 / NCTC 8237 / Type A).